We begin with the raw amino-acid sequence, 386 residues long: Cytochrome b (386 aa).

4 helical membrane-spanning segments follow: residues 39-59, 83-104, 119-139, and 184-204; these read FGSL…FLAM, FMLK…YIHM, WNIG…GYVL, and FFSL…LHIL. Heme b is bound by residues His-89 and His-103. Residues His-188 and His-202 each contribute to the heme b site. His-207 serves as a coordination point for a ubiquinone. Transmembrane regions (helical) follow at residues 232-252, 294-314, 326-346, and 353-374; these read YKDL…CYFM, LGGV…PFIH, LGKI…WLGA, and YIMI…LVPL.

It belongs to the cytochrome b family. In terms of assembly, the main subunits of complex b-c1 are: cytochrome b, cytochrome c1 and the Rieske protein. It depends on heme b as a cofactor.

Its subcellular location is the mitochondrion inner membrane. Component of the ubiquinol-cytochrome c reductase complex (complex III or cytochrome b-c1 complex) that is part of the mitochondrial respiratory chain. The b-c1 complex mediates electron transfer from ubiquinol to cytochrome c. Contributes to the generation of a proton gradient across the mitochondrial membrane that is then used for ATP synthesis. The polypeptide is Cytochrome b (MT-CYB) (Sarcophyton glaucum (Toadstool umbrella leather coral)).